The chain runs to 151 residues: NADPH-dependent 7-cyano-7-deazaguanine reductase (151 aa).

Catalysis depends on C51, which acts as the Thioimide intermediate. D58 functions as the Proton donor in the catalytic mechanism. Residues V73 to S75 and H92 to E93 each bind substrate.

This sequence belongs to the GTP cyclohydrolase I family. QueF type 1 subfamily.

It is found in the cytoplasm. It catalyses the reaction 7-aminomethyl-7-carbaguanine + 2 NADP(+) = 7-cyano-7-deazaguanine + 2 NADPH + 3 H(+). It participates in tRNA modification; tRNA-queuosine biosynthesis. Its function is as follows. Catalyzes the NADPH-dependent reduction of 7-cyano-7-deazaguanine (preQ0) to 7-aminomethyl-7-deazaguanine (preQ1). This is NADPH-dependent 7-cyano-7-deazaguanine reductase from Bacteroides thetaiotaomicron (strain ATCC 29148 / DSM 2079 / JCM 5827 / CCUG 10774 / NCTC 10582 / VPI-5482 / E50).